Reading from the N-terminus, the 246-residue chain is Major prion protein (246 aa).

The signal sequence occupies residues 1 to 15 (MLVLFVATWSDLGLC). Residues 16–223 (KKRPKPGGWN…ESQAYYQRGS (208 aa)) are interaction with GRB2, ERI3 and SYN1. A disordered region spans residues 18–102 (RPKPGGWNTG…HKPSKPKTSM (85 aa)). 5 repeat units span residues 44–52 (PQGGGGWGQ), 53–60 (PHGGGWGQ), 61–68 (PHGGGWGQ), 69–76 (PHGGGWGQ), and 77–84 (PHGGGWGQ). The tract at residues 44-84 (PQGGGGWGQPHGGGWGQPHGGGWGQPHGGGWGQPHGGGWGQ) is 5 X 8 AA tandem repeats of P-H-G-G-G-W-G-Q. Over residues 45-88 (QGGGGWGQPHGGGWGQPHGGGWGQPHGGGWGQPHGGGWGQGGGT) the composition is skewed to gly residues. Cu(2+)-binding residues include H54, G55, G56, H62, G63, G64, H70, G71, G72, H78, G79, and G80. Positions 91-102 (QWHKPSKPKTSM) are enriched in basic residues. C172 and C207 form a disulfide bridge. Residues N174 and N190 are each glycosylated (N-linked (GlcNAc...) asparagine). S223 carries the GPI-anchor amidated serine lipid modification. Residues 224 to 246 (SMVLFSSPPVILLISFLIFLIVG) constitute a propeptide, removed in mature form.

Belongs to the prion family. In terms of assembly, monomer and homodimer. Has a tendency to aggregate into amyloid fibrils containing a cross-beta spine, formed by a steric zipper of superposed beta-strands. Soluble oligomers may represent an intermediate stage on the path to fibril formation. Copper binding may promote oligomerization. Interacts with GRB2, APP, ERI3/PRNPIP and SYN1. Mislocalized cytosolically exposed PrP interacts with MGRN1; this interaction alters MGRN1 subcellular location and causes lysosomal enlargement. Interacts with KIAA1191.

It localises to the cell membrane. The protein localises to the golgi apparatus. Its function is as follows. Its primary physiological function is unclear. Has cytoprotective activity against internal or environmental stresses. May play a role in neuronal development and synaptic plasticity. May be required for neuronal myelin sheath maintenance. May play a role in iron uptake and iron homeostasis. Soluble oligomers are toxic to cultured neuroblastoma cells and induce apoptosis (in vitro). Association with GPC1 (via its heparan sulfate chains) targets PRNP to lipid rafts. Also provides Cu(2+) or Zn(2+) for the ascorbate-mediated GPC1 deaminase degradation of its heparan sulfate side chains. In Cercopithecus mona (Mona monkey), this protein is Major prion protein (PRNP).